The primary structure comprises 352 residues: Phenylalanine--tRNA ligase alpha subunit (352 aa).

Glutamate 258 lines the Mg(2+) pocket.

It belongs to the class-II aminoacyl-tRNA synthetase family. Phe-tRNA synthetase alpha subunit type 1 subfamily. As to quaternary structure, tetramer of two alpha and two beta subunits. Mg(2+) is required as a cofactor.

It is found in the cytoplasm. It catalyses the reaction tRNA(Phe) + L-phenylalanine + ATP = L-phenylalanyl-tRNA(Phe) + AMP + diphosphate + H(+). The polypeptide is Phenylalanine--tRNA ligase alpha subunit (Staphylococcus carnosus (strain TM300)).